The following is a 229-amino-acid chain: NAD-dependent protein deacetylase (229 aa).

In terms of domain architecture, Deacetylase sirtuin-type spans 1 to 229 (MNNLKEAIKQ…NDAVKVFAEI (229 aa)). NAD(+) is bound by residues Ala20, Arg32, Gln96, Ile98, Asp99, His114, Thr181, Ser182, Asn205, and Val223. 2 residues coordinate nicotinamide: Ile98 and Asp99. The active-site Proton acceptor is His114.

Belongs to the sirtuin family. Class U subfamily.

It is found in the cytoplasm. It carries out the reaction N(6)-acetyl-L-lysyl-[protein] + NAD(+) + H2O = 2''-O-acetyl-ADP-D-ribose + nicotinamide + L-lysyl-[protein]. In terms of biological role, NAD-dependent protein deacetylase which modulates the activities of several enzymes which are inactive in their acetylated form. This chain is NAD-dependent protein deacetylase, found in Listeria innocua serovar 6a (strain ATCC BAA-680 / CLIP 11262).